A 680-amino-acid chain; its full sequence is Probable galacturonosyltransferase 3 (680 aa).

Residues 1–6 (MTTFST) lie on the Cytoplasmic side of the membrane. A helical; Signal-anchor for type II membrane protein membrane pass occupies residues 7–27 (CAAFLSLVVVLHAVHVGGAIL). The Lumenal segment spans residues 28–680 (ESQAPHRELK…PYLRRCDINE (653 aa)). Residues 118-146 (SFQNDTGMEDNASHSTTNQTDESENQFPN) are disordered. N-linked (GlcNAc...) asparagine glycosylation is found at asparagine 121, asparagine 128, asparagine 135, asparagine 239, asparagine 386, asparagine 438, asparagine 545, asparagine 578, asparagine 610, and asparagine 631. Positions 130 to 145 (SHSTTNQTDESENQFP) are enriched in polar residues.

It belongs to the glycosyltransferase 8 family. In terms of tissue distribution, expressed in roots, inflorescences, siliques, leaves and stems.

The protein resides in the golgi apparatus membrane. The protein operates within glycan metabolism; pectin biosynthesis. Its function is as follows. May be involved in pectin and/or xylans biosynthesis in cell walls. In Arabidopsis thaliana (Mouse-ear cress), this protein is Probable galacturonosyltransferase 3 (GAUT3).